The sequence spans 455 residues: MDTNNNIEKEILALAKQKVSLIEYENYLSQIKYNPNASKSDIAFFYAPNKVLCTTITAKYGALLKEILSQNKVGMHLAHSVDVRIEVAPKIQINAQANINYKAIKTSVKDSYTFENFVVGSCNNTVYEIAKKVAQSDTPPYNPVLFYGGTGLGKTHILNAIGNHALEKHKKVVLVTSEDFLTDFLKHLDNKTMDSFKAKYRHCDFFLLDDAQFLQGKPKLEEEFFHTFNELHANSKQIVLISDRSPKNIAGLEDRLKSRFEWGITAKVMPPNLETKLSIVKQKCQLNQITLPEEVMEYIAQHISDNIRQMEGAIIKISVNANLMNAPIDLNLAKTVLEDLQKDHAEGSSLENILLAVAQSLNLKSSEIKVSSRQKNVALARKLVVYFARLYTPNPTLSLAQFLDLKDHSSISKMYSSVKKMLEEEKNPFILSLREEIKNRLNELNDKKTAFNSSE.

The segment at 1–75 (MDTNNNIEKE…EILSQNKVGM (75 aa)) is domain I, interacts with DnaA modulators. The domain II stretch occupies residues 75-106 (MHLAHSVDVRIEVAPKIQINAQANINYKAIKT). The domain III, AAA+ region stretch occupies residues 107-321 (SVKDSYTFEN…GAIIKISVNA (215 aa)). G151, G153, K154, and T155 together coordinate ATP. The domain IV, binds dsDNA stretch occupies residues 322–455 (NLMNAPIDLN…DKKTAFNSSE (134 aa)).

It belongs to the DnaA family. Oligomerizes as a right-handed, spiral filament on DNA at oriC.

Its subcellular location is the cytoplasm. Plays an essential role in the initiation and regulation of chromosomal replication. ATP-DnaA binds to the origin of replication (oriC) to initiate formation of the DNA replication initiation complex once per cell cycle. Binds the DnaA box (a 9 base pair repeat at the origin) and separates the double-stranded (ds)DNA. Forms a right-handed helical filament on oriC DNA; dsDNA binds to the exterior of the filament while single-stranded (ss)DNA is stabiized in the filament's interior. The ATP-DnaA-oriC complex binds and stabilizes one strand of the AT-rich DNA unwinding element (DUE), permitting loading of DNA polymerase. After initiation quickly degrades to an ADP-DnaA complex that is not apt for DNA replication. Binds acidic phospholipids. This Helicobacter pylori (strain P12) protein is Chromosomal replication initiator protein DnaA.